We begin with the raw amino-acid sequence, 328 residues long: GMP reductase (328 aa).

Cysteine 176 functions as the Thioimidate intermediate in the catalytic mechanism. An NADP(+)-binding site is contributed by 205-228; the sequence is IIADGGIRTHGDIAKSIRFGASMI.

The protein belongs to the IMPDH/GMPR family. GuaC type 2 subfamily.

The enzyme catalyses IMP + NH4(+) + NADP(+) = GMP + NADPH + 2 H(+). Its function is as follows. Catalyzes the irreversible NADPH-dependent deamination of GMP to IMP. It functions in the conversion of nucleobase, nucleoside and nucleotide derivatives of G to A nucleotides, and in maintaining the intracellular balance of A and G nucleotides. The chain is GMP reductase from Streptococcus pneumoniae (strain JJA).